We begin with the raw amino-acid sequence, 228 residues long: Ion-translocating oxidoreductase complex subunit E (228 aa).

A run of 5 helical transmembrane segments spans residues 18–38 (ALVQ…ATNA), 69–89 (IPIY…LINA), 92–112 (FGLY…CIVV), 125–145 (LLSA…MFVL), and 182–202 (PFLL…MLAV).

The protein belongs to the NqrDE/RnfAE family. In terms of assembly, the complex is composed of six subunits: RnfA, RnfB, RnfC, RnfD, RnfE and RnfG.

It localises to the cell inner membrane. Its function is as follows. Part of a membrane-bound complex that couples electron transfer with translocation of ions across the membrane. This Cronobacter sakazakii (strain ATCC BAA-894) (Enterobacter sakazakii) protein is Ion-translocating oxidoreductase complex subunit E.